We begin with the raw amino-acid sequence, 206 residues long: Ras-related protein Ral-B (206 aa).

GTP is bound at residue 21 to 29; it reads GSGGVGKSA. An Effector region motif is present at residues 43–51; sequence YEPTKADSY. Residues 68–72, 128–131, and 158–160 contribute to the GTP site; these read DTAGQ, NKSD, and SAK. Residues 181–206 form a disordered region; sequence MSENKDKNGRKSSKSKKSFKERCCLL. Position 203 is a cysteine methyl ester (Cys-203). Cys-203 carries the S-geranylgeranyl cysteine lipid modification. Positions 204–206 are cleaved as a propeptide — removed in mature form; the sequence is CLL.

Belongs to the small GTPase superfamily. Ras family. In terms of assembly, interacts with EXOC2/Sec5 and EXOC8/Exo84. Interacts (via effector domain) with RALBP1. Post-translationally, prenylation is essential for membrane localization. The farnesylated form confers resistance to the proapoptotic and anti-anchorage-dependent growth effects of some geranylgeranyltransferase I inhibitors.

Its subcellular location is the cell membrane. It localises to the midbody. It catalyses the reaction GTP + H2O = GDP + phosphate + H(+). Alternates between an inactive form bound to GDP and an active form bound to GTP. Activated by a guanine nucleotide-exchange factor (GEF) and inactivated by a GTPase-activating protein (GAP). In terms of biological role, multifunctional GTPase involved in a variety of cellular processes including gene expression, cell migration, cell proliferation, oncogenic transformation and membrane trafficking. Accomplishes its multiple functions by interacting with distinct downstream effectors. Acts as a GTP sensor for GTP-dependent exocytosis of dense core vesicles. Required both to stabilize the assembly of the exocyst complex and to localize functional exocyst complexes to the leading edge of migrating cells. Required for suppression of apoptosis. In late stages of cytokinesis, upon completion of the bridge formation between dividing cells, mediates exocyst recruitment to the midbody to drive abscission. Involved in ligand-dependent receptor mediated endocytosis of the EGF and insulin receptors. The sequence is that of Ras-related protein Ral-B (Ralb) from Mus musculus (Mouse).